Consider the following 196-residue polypeptide: MNIIRKLKPGTISLVLGPMFAGKTTFLIHCIYMLERLEKKVVFIKSTKNTRDKTIKTHSGIQLRPKQCKIIESTQLSDVGSLTDIHAVVVDEAHFFDDLIKCRTWAEEEKIIILAGLNASFEQKMFPPIVRIFPYCSWVKYIGRTCMKCNQHNACFNVRKNADKTLILAGGSELYVTCCNNCLKNTFIKQLQPIKY.

17 to 24 (GPMFAGKT) serves as a coordination point for ATP. The Proton acceptor role is filled by Glu-92. Phe-121 provides a ligand contact to substrate. Zn(2+) contacts are provided by Cys-146 and Cys-149. 166-170 (LILAG) provides a ligand contact to substrate. Zn(2+) is bound by residues Cys-179 and Cys-182.

The protein belongs to the thymidine kinase family.

It carries out the reaction thymidine + ATP = dTMP + ADP + H(+). Functionally, phosphorylates thymidine. ASFV replicates in the cytoplasm of infected cells and contains genes encoding a number of enzymes needed for DNA synthesis, including thymidine kinase. Important for growth in swine macrophages in vitro and is a virus virulence factor in swine. This chain is Thymidine kinase, found in African swine fever virus (strain Badajoz 1971 Vero-adapted) (Ba71V).